A 465-amino-acid polypeptide reads, in one-letter code: Cysteine--tRNA ligase (465 aa).

Cys-27 is a Zn(2+) binding site. Residues 29 to 39 (PTVYNFFHIGN) carry the 'HIGH' region motif. Zn(2+) contacts are provided by Cys-207, His-232, and Glu-236. Positions 264–268 (KMSKS) match the 'KMSKS' region motif. Lys-267 is an ATP binding site.

It belongs to the class-I aminoacyl-tRNA synthetase family. As to quaternary structure, monomer. Zn(2+) is required as a cofactor.

Its subcellular location is the cytoplasm. It catalyses the reaction tRNA(Cys) + L-cysteine + ATP = L-cysteinyl-tRNA(Cys) + AMP + diphosphate. This Clostridium kluyveri (strain NBRC 12016) protein is Cysteine--tRNA ligase.